A 427-amino-acid polypeptide reads, in one-letter code: Serine--tRNA ligase (427 aa).

231-233 is an L-serine binding site; the sequence is TAE. Residue 262 to 264 coordinates ATP; sequence RSE. An L-serine-binding site is contributed by Glu285. Residue 349 to 352 participates in ATP binding; that stretch reads EISS. Ser385 lines the L-serine pocket.

Belongs to the class-II aminoacyl-tRNA synthetase family. Type-1 seryl-tRNA synthetase subfamily. Homodimer. The tRNA molecule binds across the dimer.

Its subcellular location is the cytoplasm. The enzyme catalyses tRNA(Ser) + L-serine + ATP = L-seryl-tRNA(Ser) + AMP + diphosphate + H(+). It carries out the reaction tRNA(Sec) + L-serine + ATP = L-seryl-tRNA(Sec) + AMP + diphosphate + H(+). The protein operates within aminoacyl-tRNA biosynthesis; selenocysteinyl-tRNA(Sec) biosynthesis; L-seryl-tRNA(Sec) from L-serine and tRNA(Sec): step 1/1. Its function is as follows. Catalyzes the attachment of serine to tRNA(Ser). Is also able to aminoacylate tRNA(Sec) with serine, to form the misacylated tRNA L-seryl-tRNA(Sec), which will be further converted into selenocysteinyl-tRNA(Sec). This Listeria innocua serovar 6a (strain ATCC BAA-680 / CLIP 11262) protein is Serine--tRNA ligase.